A 34-amino-acid polypeptide reads, in one-letter code: U4-theraphotoxin-Hs1a (34 aa).

3 disulfides stabilise this stretch: Cys3–Cys17, Cys10–Cys22, and Cys16–Cys33.

Belongs to the neurotoxin 14 (magi-1) family. 05 (ICK-7) subfamily. Expressed by the venom gland.

It localises to the secreted. Functionally, intracisternal injection paralyzes mice. The sequence is that of U4-theraphotoxin-Hs1a from Cyriopagopus schmidti (Chinese bird spider).